The chain runs to 188 residues: Putative pre-16S rRNA nuclease (188 aa).

The tract at residues 156–188 (LRQGDAAPGGSDDERDEDGDTDGEDGGGDGGGE) is disordered. Over residues 166–188 (SDDERDEDGDTDGEDGGGDGGGE) the composition is skewed to acidic residues.

This sequence belongs to the YqgF nuclease family.

It is found in the cytoplasm. In terms of biological role, could be a nuclease involved in processing of the 5'-end of pre-16S rRNA. This chain is Putative pre-16S rRNA nuclease, found in Rhodospirillum centenum (strain ATCC 51521 / SW).